We begin with the raw amino-acid sequence, 262 residues long: MRFGLNIDHIVTLREVRKTYEPEILEALFIAKNTHKVDLITIHLREDKRHIQNEDVLRLLEISPLPINIECSINAEITDFLCSLKNKPSKVTIVPENRNEVTTEGGLDCSLKGLEEVIRAYHNKGIEVSLFVDPLKDALHFAKEHQVKQVEFHTGVYANLHNALYSNANNQIHAISTLKDKCPKELKEELHNAFLQLRRMSKEAFFMGIVVCAGHGLNYSNVKELLKIPSLRELNIGHSVVSKAVLVGLEKAILEMAQLIKR.

3-amino-2-oxopropyl phosphate is bound at residue Asn6. Residue 8–9 (DH) participates in 1-deoxy-D-xylulose 5-phosphate binding. Position 17 (Arg17) interacts with 3-amino-2-oxopropyl phosphate. The active-site Proton acceptor is the His43. Residues Arg45 and His50 each coordinate 1-deoxy-D-xylulose 5-phosphate. The active-site Proton acceptor is Glu70. Thr102 provides a ligand contact to 1-deoxy-D-xylulose 5-phosphate. The active-site Proton donor is His215. Residues Gly216 and 237–238 (GH) each bind 3-amino-2-oxopropyl phosphate.

Belongs to the PNP synthase family. As to quaternary structure, homooctamer; tetramer of dimers.

It is found in the cytoplasm. It carries out the reaction 3-amino-2-oxopropyl phosphate + 1-deoxy-D-xylulose 5-phosphate = pyridoxine 5'-phosphate + phosphate + 2 H2O + H(+). It functions in the pathway cofactor biosynthesis; pyridoxine 5'-phosphate biosynthesis; pyridoxine 5'-phosphate from D-erythrose 4-phosphate: step 5/5. Catalyzes the complicated ring closure reaction between the two acyclic compounds 1-deoxy-D-xylulose-5-phosphate (DXP) and 3-amino-2-oxopropyl phosphate (1-amino-acetone-3-phosphate or AAP) to form pyridoxine 5'-phosphate (PNP) and inorganic phosphate. This chain is Pyridoxine 5'-phosphate synthase, found in Helicobacter pylori (strain J99 / ATCC 700824) (Campylobacter pylori J99).